The primary structure comprises 345 residues: Ninja-family protein AFP1 (345 aa).

Disordered regions lie at residues 114–185 and 201–256; these read TSLP…ATAN and QVSG…RRLS. Basic and acidic residues-rich tracts occupy residues 123–132 and 222–232; these read EWRKRKEMQT and LETKASSDEAR. Positions 235–249 are enriched in low complexity; that stretch reads PSTTQPQQETTTKPT.

The protein belongs to the Ninja family. Forms a heterodimer with AFP2. Interacts with ABI5/DPBF1, DPBF2, AREB3/DPBF3, ABF1, ABF3/DPBF5 and ABF4/AREB2.

The protein localises to the nucleus. In terms of biological role, acts as a negative regulator of abscisic acid (ABA) response during germination through the ubiquitin-mediated proteolysis of ABI5/DPBF1. In Arabidopsis thaliana (Mouse-ear cress), this protein is Ninja-family protein AFP1 (AFP1).